The chain runs to 127 residues: Modulator protein MzrA (127 aa).

Residues 1–10 (MVISPLALRR) are Cytoplasmic-facing. Residues 11 to 31 (LSYGLIALVLLSALILVWTAL) traverse the membrane as a helical segment. Residues 32 to 127 (QRQESTLAIR…RLRDTSHRFG (96 aa)) lie on the Periplasmic side of the membrane.

Belongs to the MzrA family. Interacts with EnvZ.

The protein resides in the cell inner membrane. In terms of biological role, modulates the activity of the EnvZ/OmpR two-component regulatory system, probably by directly modulating EnvZ enzymatic activity and increasing stability of phosphorylated OmpR. This chain is Modulator protein MzrA, found in Enterobacter sp. (strain 638).